A 411-amino-acid chain; its full sequence is 2,3-bisphosphoglycerate-independent phosphoglycerate mutase (411 aa).

The segment at 164 to 190 (VSSNDPKKEGVQPLTIRPGSDDPADAK) is disordered.

Belongs to the BPG-independent phosphoglycerate mutase family. A-PGAM subfamily.

The enzyme catalyses (2R)-2-phosphoglycerate = (2R)-3-phosphoglycerate. It participates in carbohydrate degradation; glycolysis; pyruvate from D-glyceraldehyde 3-phosphate: step 3/5. Functionally, catalyzes the interconversion of 2-phosphoglycerate and 3-phosphoglycerate. This is 2,3-bisphosphoglycerate-independent phosphoglycerate mutase from Methanoculleus marisnigri (strain ATCC 35101 / DSM 1498 / JR1).